Reading from the N-terminus, the 284-residue chain is 4-diphosphocytidyl-2-C-methyl-D-erythritol kinase (284 aa).

Residue lysine 14 is part of the active site. 98-108 provides a ligand contact to ATP; the sequence is PMGGGLGGGSS. Aspartate 140 is an active-site residue.

This sequence belongs to the GHMP kinase family. IspE subfamily.

It carries out the reaction 4-CDP-2-C-methyl-D-erythritol + ATP = 4-CDP-2-C-methyl-D-erythritol 2-phosphate + ADP + H(+). The protein operates within isoprenoid biosynthesis; isopentenyl diphosphate biosynthesis via DXP pathway; isopentenyl diphosphate from 1-deoxy-D-xylulose 5-phosphate: step 3/6. Functionally, catalyzes the phosphorylation of the position 2 hydroxy group of 4-diphosphocytidyl-2C-methyl-D-erythritol. This is 4-diphosphocytidyl-2-C-methyl-D-erythritol kinase from Shewanella baltica (strain OS223).